A 697-amino-acid polypeptide reads, in one-letter code: Trishanku (697 aa).

The tract at residues 1-94 (MEIEPVVRIS…NNNSNSNGTD (94 aa)) is disordered. Over residues 12 to 47 (NGNNNQNNNNNNNNNTNNNSNNNNNNNNSSNINSTN) the composition is skewed to low complexity. The span at 58-72 (KMISNINNQKSPNPL) shows a compositional bias: polar residues. Residues 73 to 91 (NSSVDDNNNTNNNNNSNSN) are compositionally biased toward low complexity. The 68-residue stretch at 122-189 (SDVIFKVGDR…ICIGILDLDY (68 aa)) folds into the BTB domain. Residues 311-455 (IQQQQQQQQQ…DSANDDYEYS (145 aa)) are disordered. Positions 312–331 (QQQQQQQQQQLQSANGASGK) are enriched in low complexity. The span at 332–344 (SHGKRSSSSHLKK) shows a compositional bias: basic residues. Positions 353–363 (GSCSSRCSSRR) are enriched in low complexity. Positions 416 to 453 (DDFENDSEDGDDDDEDDDEDDDFTDDDDKDDSANDDYE) are enriched in acidic residues.

In terms of tissue distribution, expressed strongly in presumptive spore (prespore or psp) cells during the late G2 phase of cell cycle. Present at a low level in vegetative cells.

Required for normal morphogenesis and cell-type stability. In Dictyostelium discoideum (Social amoeba), this protein is Trishanku (triA).